Consider the following 262-residue polypeptide: 5'-nucleotidase SurE (262 aa).

A divalent metal cation-binding residues include D13, D14, S44, and N97.

The protein belongs to the SurE nucleotidase family. The cofactor is a divalent metal cation.

It localises to the cytoplasm. The enzyme catalyses a ribonucleoside 5'-phosphate + H2O = a ribonucleoside + phosphate. Functionally, nucleotidase that shows phosphatase activity on nucleoside 5'-monophosphates. This chain is 5'-nucleotidase SurE, found in Myxococcus xanthus (strain DK1622).